A 449-amino-acid chain; its full sequence is Chromogranin-A (449 aa).

Residues 1 to 18 (MRSAAVLALLLCAGQVIA) form the signal peptide. C35 and C56 are oxidised to a cystine. Residues 87 to 431 (AKERTHQQKK…EDQELESLSA (345 aa)) form a disordered region. Position 99 is a phosphoserine (S99). Residues 107–140 (VLEKPNDQAEPKEVTEEVSSKDAAEKRDDFKEVE) show a composition bias toward basic and acidic residues. Residue S142 is modified to Phosphoserine. The O-linked (GalNAc...) serine glycan is linked to S185. Residue Y191 is modified to Phosphotyrosine. The residue at position 200 (S200) is a Phosphoserine. S204 carries an O-linked (GalNAc...) serine glycan. S215 is subject to Phosphoserine. The segment covering 233-242 (EAEAREKAVP) has biased composition (basic and acidic residues). Residue T249 is glycosylated (O-linked (GalNAc...) threonine). Basic and acidic residues predominate over residues 279–297 (GAEEAKPPEGKGEWAHSRQ). Position 295 is a phosphoserine (S295). Position 312 is a glycine amide (G312). Residues S315, S325, and S363 each carry the phosphoserine modification. Residues 323 to 351 (QLSKEWEDAKRWSKMDQLAKELTAEKRLE) are compositionally biased toward basic and acidic residues. M364 is modified (methionine sulfoxide). Residues S390, S394, S416, and S430 each carry the phosphoserine modification. A compositionally biased stretch (basic and acidic residues) spans 406-423 (YPEEKKEEEGSANRRPED). O-linked (Xyl...) (chondroitin sulfate) serine glycosylation occurs at S416.

This sequence belongs to the chromogranin/secretogranin protein family. As to quaternary structure, self-interacts; self-assembly is promoted in vitro by chondroitin sulfate attachment which occurs at mildly acidic pH conditions. Interacts with SCG3. Interacts with ITPR1 in the secretory granules. In terms of processing, in secretory granules, is attacked at both N- and C-terminal sides by proteolytic enzymes generating numerous peptides of various activities. Proteolytic processing can give rise to additional longer forms of catestatin peptides which display a less potent catecholamine release-inhibitory activity. Post-translationally, O-glycosylated; contains chondroitin sulfate (CS). CS attachment is pH-dependent, being observed at mildly acidic conditions of pH 5 but not at neutral pH, and promotes self-assembly in vitro. In terms of tissue distribution, highest concentration of GE-25 found in adrenal medulla with lower levels present in the pituitary, the intestinal mucosa and the pancreas. Also found in the brain.

The protein resides in the secreted. Its subcellular location is the cytoplasmic vesicle. It localises to the secretory vesicle. It is found in the neuronal dense core vesicle. Functionally, strongly inhibits glucose induced insulin release from the pancreas. Completely inhibits catecholamine release from chromaffin cells. In terms of biological role, has antibacterial activity against M.luteus. Not active against E.coli. Its function is as follows. Inhibits catecholamine release from chromaffin cells and noradrenergic neurons by acting as a non-competitive nicotinic cholinergic antagonist. Displays antibacterial activity against Gram-positive bacteria M.luteus and B.megaterium, and Gram-negative bacteria E.coli, and antifungal activity against a variety of filamentous fungi including A.fumigatus, N.hematococca, F.culmorum, F.oxyporum, T.mentagrophytes and several forms of Candida: C.albicans, C.tropicalis, C.glabrata and C.neoform. Can induce mast cell migration, degranulation and production of cytokines and chemokines. Functionally, has antibacterial activity against Gram-positive bacteria M.luteus, B.megaterium. Not active against Gram-positive bacteria B.cereus, B.subtilis, S.pyogenes, M.fortuitum, S.aureus and L.monocytogenes and against Gram-negative bacteria E.coli, E.cloacae, S.typhimurium, K.pneumoniae and P.aeruginosa. Possesses antifungal activity against N.crassa, A.fumigatus, A.brassicicola, N.hematococca, F.culmorum and F.oxyporum and against the yeast S.cerevisiae and C.albicans. Inactive against A.benhamiae. Has antifungal activity against N.crassa, A.fumigatus, A.brassicicola, N.hematococca, F.culmorum, F.oxyporum, A.benhamiae, C.neoformans, as well as against yeasts C.albicans, and C.tropicalis. Seems to be inactive against C.glabrata. Interacts with the fungal cell wall, crosses the plasma membrane and accumulates in fungal cells where it inhibits calcineurin activity. In terms of biological role, regulates granule biogenesis in endocrine cells by up-regulating the transcription of protease nexin 1 (SERPINE2) via a cAMP-PKA-SP1 pathway. This leads to inhibition of granule protein degradation in the Golgi complex which in turn promotes granule formation. In Bos taurus (Bovine), this protein is Chromogranin-A (CHGA).